Consider the following 233-residue polypeptide: Purine nucleoside phosphorylase DeoD-type (233 aa).

Residue His4 coordinates a purine D-ribonucleoside. Phosphate contacts are provided by residues Gly20, Arg24, Arg43, and 87-90 (RIGT). A purine D-ribonucleoside-binding positions include 179–181 (EME) and 203–204 (SD). Asp204 functions as the Proton donor in the catalytic mechanism.

Belongs to the PNP/UDP phosphorylase family. As to quaternary structure, homohexamer; trimer of homodimers.

The enzyme catalyses a purine D-ribonucleoside + phosphate = a purine nucleobase + alpha-D-ribose 1-phosphate. It catalyses the reaction a purine 2'-deoxy-D-ribonucleoside + phosphate = a purine nucleobase + 2-deoxy-alpha-D-ribose 1-phosphate. Catalyzes the reversible phosphorolytic breakdown of the N-glycosidic bond in the beta-(deoxy)ribonucleoside molecules, with the formation of the corresponding free purine bases and pentose-1-phosphate. In Helicobacter acinonychis (strain Sheeba), this protein is Purine nucleoside phosphorylase DeoD-type.